A 316-amino-acid polypeptide reads, in one-letter code: Methionyl-tRNA formyltransferase (316 aa).

111 to 114 serves as a coordination point for (6S)-5,6,7,8-tetrahydrofolate; sequence GLLP.

Belongs to the Fmt family.

It catalyses the reaction L-methionyl-tRNA(fMet) + (6R)-10-formyltetrahydrofolate = N-formyl-L-methionyl-tRNA(fMet) + (6S)-5,6,7,8-tetrahydrofolate + H(+). Functionally, attaches a formyl group to the free amino group of methionyl-tRNA(fMet). The formyl group appears to play a dual role in the initiator identity of N-formylmethionyl-tRNA by promoting its recognition by IF2 and preventing the misappropriation of this tRNA by the elongation apparatus. In Chlamydia trachomatis serovar A (strain ATCC VR-571B / DSM 19440 / HAR-13), this protein is Methionyl-tRNA formyltransferase.